The primary structure comprises 250 residues: Pyrroloquinoline-quinone synthase (250 aa).

This sequence belongs to the PqqC family.

It catalyses the reaction 6-(2-amino-2-carboxyethyl)-7,8-dioxo-1,2,3,4,7,8-hexahydroquinoline-2,4-dicarboxylate + 3 O2 = pyrroloquinoline quinone + 2 H2O2 + 2 H2O + H(+). The protein operates within cofactor biosynthesis; pyrroloquinoline quinone biosynthesis. Its function is as follows. Ring cyclization and eight-electron oxidation of 3a-(2-amino-2-carboxyethyl)-4,5-dioxo-4,5,6,7,8,9-hexahydroquinoline-7,9-dicarboxylic-acid to PQQ. The protein is Pyrroloquinoline-quinone synthase of Xanthomonas oryzae pv. oryzae (strain KACC10331 / KXO85).